A 426-amino-acid polypeptide reads, in one-letter code: Trigger factor 1 (426 aa).

The PPIase FKBP-type domain maps to 163-248 (QDTVNIDFAG…VNKLKRKEYA (86 aa)).

It belongs to the FKBP-type PPIase family. Tig subfamily.

It localises to the cytoplasm. The enzyme catalyses [protein]-peptidylproline (omega=180) = [protein]-peptidylproline (omega=0). In terms of biological role, involved in protein export. Acts as a chaperone by maintaining the newly synthesized protein in an open conformation. Functions as a peptidyl-prolyl cis-trans isomerase. This is Trigger factor 1 from Desulfitobacterium hafniense (strain Y51).